The sequence spans 138 residues: Large ribosomal subunit protein uL16 (138 aa).

Residues Met-1 to Gly-15 are compositionally biased toward basic residues. Positions Met-1–Ala-21 are disordered.

It belongs to the universal ribosomal protein uL16 family. As to quaternary structure, part of the 50S ribosomal subunit.

In terms of biological role, binds 23S rRNA and is also seen to make contacts with the A and possibly P site tRNAs. The protein is Large ribosomal subunit protein uL16 of Borrelia recurrentis (strain A1).